Here is a 189-residue protein sequence, read N- to C-terminus: Cell division protein SepF (189 aa).

A disordered region spans residues 25–70; that stretch reads ESRVQQQAVKPSNSRPAQQEPVRDIKQPRLVSSSSQHVTNTPSSNE. Composition is skewed to polar residues over residues 27–41 and 54–70; these read RVQQ…SRPA and LVSS…SSNE.

This sequence belongs to the SepF family. As to quaternary structure, homodimer. Interacts with FtsZ.

The protein resides in the cytoplasm. Its function is as follows. Cell division protein that is part of the divisome complex and is recruited early to the Z-ring. Probably stimulates Z-ring formation, perhaps through the cross-linking of FtsZ protofilaments. Its function overlaps with FtsA. In Streptococcus gordonii (strain Challis / ATCC 35105 / BCRC 15272 / CH1 / DL1 / V288), this protein is Cell division protein SepF.